A 603-amino-acid chain; its full sequence is F-box only protein 46 (603 aa).

The tract at residues 20–54 (YSQNQPRPPSATLKPPVCPDTSSGTEPDHRPAHLE) is disordered. Residues Ser-21 and Ser-67 each carry the phosphoserine modification. Disordered regions lie at residues 111–163 (GGSR…PTSS), 235–301 (EAQR…TRAK), 332–359 (EASE…ARDC), and 396–442 (TVSP…GTTD). At Thr-347 the chain carries Phosphothreonine. Pro residues predominate over residues 347 to 356 (TPPAPPPPPA). An F-box domain is found at 470–522 (RQYMLLLPEHVLVKIFSFLPTRALAALKCTCHHFKGIIEAFGVRATDSRWSRD).

In terms of assembly, part of a SCF (SKP1-cullin-F-box) protein ligase complex SCF(FBXO46) composed of CUL1, SKP1, RBX1 and FBXO46. In terms of processing, phosphorylated by ATM in response to DNA damage, promoting ubiquitination and degradation by the SCF(FBXO31) complex. ATM-phosphorylated FBXO46 is ubiquitinated and degradaded by the SCF(FBXO31) complex in response to DNA damage.

It participates in protein modification; protein ubiquitination. In terms of biological role, substrate-recognition component of the SCF(FBXO46) protein ligase complex, which mediates the ubiquitination and degradation of target proteins. In absence of stress, the SCF(FBXO46) complex catalyzes ubiquitination and degradation of MTOR-phosphorylated FBXO31. This Rattus norvegicus (Rat) protein is F-box only protein 46 (Fbxo46).